The sequence spans 131 residues: Putative gene 51 protein (131 aa).

This is Putative gene 51 protein (51) from Bacillus phage SP01 (Bacteriophage SP01).